Reading from the N-terminus, the 179-residue chain is Probable WRKY transcription factor 24 (179 aa).

Positions 92–157 (SDDDVLDDGY…YEGVHNHPCE (66 aa)) form a DNA-binding region, WRKY.

This sequence belongs to the WRKY group II-c family.

It is found in the nucleus. In terms of biological role, transcription factor. Interacts specifically with the W box (5'-(T)TGAC[CT]-3'), a frequently occurring elicitor-responsive cis-acting element. The protein is Probable WRKY transcription factor 24 (WRKY24) of Arabidopsis thaliana (Mouse-ear cress).